The primary structure comprises 61 residues: Large ribosomal subunit protein bL32 (61 aa).

The span at 1–22 shows a compositional bias: basic residues; that stretch reads MAVPKKKTSKSRRDMRRSHHAL. The segment at 1–27 is disordered; that stretch reads MAVPKKKTSKSRRDMRRSHHALKPSAY.

It belongs to the bacterial ribosomal protein bL32 family.

This chain is Large ribosomal subunit protein bL32, found in Rhodospirillum rubrum (strain ATCC 11170 / ATH 1.1.1 / DSM 467 / LMG 4362 / NCIMB 8255 / S1).